Consider the following 1414-residue polypeptide: DNA-directed RNA polymerase subunit beta' (1414 aa).

Zn(2+)-binding residues include Cys70, Cys72, Cys85, and Cys88. Asp460, Asp462, and Asp464 together coordinate Mg(2+). Positions 814, 888, 895, and 898 each coordinate Zn(2+). Low complexity predominate over residues 1392–1403; the sequence is EQALSEALKSSA. Residues 1392 to 1414 form a disordered region; it reads EQALSEALKSSAPQEAKAAQKDE.

This sequence belongs to the RNA polymerase beta' chain family. As to quaternary structure, the RNAP catalytic core consists of 2 alpha, 1 beta, 1 beta' and 1 omega subunit. When a sigma factor is associated with the core the holoenzyme is formed, which can initiate transcription. Mg(2+) serves as cofactor. It depends on Zn(2+) as a cofactor.

The enzyme catalyses RNA(n) + a ribonucleoside 5'-triphosphate = RNA(n+1) + diphosphate. In terms of biological role, DNA-dependent RNA polymerase catalyzes the transcription of DNA into RNA using the four ribonucleoside triphosphates as substrates. The polypeptide is DNA-directed RNA polymerase subunit beta' (Coxiella burnetii (strain Dugway 5J108-111)).